A 680-amino-acid chain; its full sequence is 1-deoxy-D-xylulose-5-phosphate synthase (680 aa).

Thiamine diphosphate-binding positions include H113 and 154 to 156; that span reads GHS. D185 lines the Mg(2+) pocket. Thiamine diphosphate-binding positions include 186 to 187, N214, F323, and E408; that span reads GA. Residue N214 coordinates Mg(2+).

This sequence belongs to the transketolase family. DXPS subfamily. Homodimer. Requires Mg(2+) as cofactor. Thiamine diphosphate is required as a cofactor.

It carries out the reaction D-glyceraldehyde 3-phosphate + pyruvate + H(+) = 1-deoxy-D-xylulose 5-phosphate + CO2. The protein operates within metabolic intermediate biosynthesis; 1-deoxy-D-xylulose 5-phosphate biosynthesis; 1-deoxy-D-xylulose 5-phosphate from D-glyceraldehyde 3-phosphate and pyruvate: step 1/1. Functionally, catalyzes the acyloin condensation reaction between C atoms 2 and 3 of pyruvate and glyceraldehyde 3-phosphate to yield 1-deoxy-D-xylulose-5-phosphate (DXP). The chain is 1-deoxy-D-xylulose-5-phosphate synthase from Psychrobacter arcticus (strain DSM 17307 / VKM B-2377 / 273-4).